A 408-amino-acid polypeptide reads, in one-letter code: Probable fructose-2,6-bisphosphatase C732.02c (408 aa).

16–24 serves as a coordination point for ATP; sequence GLPASGKTS. Asp-88 is a catalytic residue. 127–132 is a binding site for ATP; the sequence is NITDMC. Beta-D-fructose 6-phosphate is bound at residue Tyr-157. Residue Arg-213 participates in beta-D-fructose 2,6-bisphosphate binding. The active-site Tele-phosphohistidine intermediate is the His-214. 2 residues coordinate beta-D-fructose 2,6-bisphosphate: Asn-220 and Gly-226. Glu-285 (proton donor/acceptor) is an active-site residue. Tyr-296, Arg-310, Lys-314, Tyr-325, Gln-351, and Arg-355 together coordinate beta-D-fructose 2,6-bisphosphate. 307–310 lines the ATP pocket; that stretch reads AELR. ATP is bound by residues 351 to 355 and Tyr-387; that span reads QAILR.

The protein in the C-terminal section; belongs to the phosphoglycerate mutase family.

It catalyses the reaction beta-D-fructose 2,6-bisphosphate + H2O = beta-D-fructose 6-phosphate + phosphate. Its function is as follows. This is predominantly if not solely a fructose-2,6-bisphosphatase. This chain is Probable fructose-2,6-bisphosphatase C732.02c, found in Schizosaccharomyces pombe (strain 972 / ATCC 24843) (Fission yeast).